The primary structure comprises 92 residues: Progonadoliberin-1 (92 aa).

The N-terminal stretch at 1 to 23 is a signal peptide; sequence MELVPKFLAGLILLTLCVGGCYA. Residue Q24 is modified to Pyrrolidone carboxylic acid. Residue G33 is modified to Glycine amide.

Belongs to the GnRH family.

It localises to the secreted. Stimulates the secretion of gonadotropins; it stimulates the secretion of both luteinizing and follicle-stimulating hormones. The sequence is that of Progonadoliberin-1 (GNRH1) from Tupaia belangeri (Common tree shrew).